Here is a 422-residue protein sequence, read N- to C-terminus: Probable tRNA pseudouridine synthase D (422 aa).

Asp83 serves as the catalytic Nucleophile. In terms of domain architecture, TRUD spans Gly164–Lys386.

This sequence belongs to the pseudouridine synthase TruD family.

It carries out the reaction uridine(13) in tRNA = pseudouridine(13) in tRNA. In terms of biological role, could be responsible for synthesis of pseudouridine from uracil-13 in transfer RNAs. The sequence is that of Probable tRNA pseudouridine synthase D from Thermococcus sibiricus (strain DSM 12597 / MM 739).